Reading from the N-terminus, the 567-residue chain is MQIEKTAELNLLWGSLILEELARLEVQHVCMAPGSRSTPLTLAAAKQTKLKQHLHFDERGLGFLALGLAKASRAPVAIITTSGTAVANLYPAIVEAWLTQVPLIVLSGDRPPELLGCGANQAIVQPAIFADYAKQVNLPTPDMAIPPQALLTLLDESVANAKGPIHVNCMYREPLYPGSMSADFTHYLSPLGNWQHSALPYNQFADAQLVSAPTSDALARFVHGKGVIIAGTLAPEQQPEQLIELAQKLGWPLLTDAQSQLRQHGAAIGNIDQLLLQPKAKALLQEADTVLVFGGRLLSKRLISYLSEQKWKRYWQVLPQQTRLDPSHSAKQVWISPLAAFAQLPWPRSSEANWALQLIEANEQLATLFQQQIDDAEFGEAQVVRTIAGRGEQQLFIGNSLPVRLYDMYAPITPIAPRVFTNRGASGIDGLLATACGIAAHKASSTTLVIGDLSQLHDLNSLALAAKQQGTLVIVILNNDGGNIFNLLPVPDEKLRSGYYRLAHGLEFGYGAAMFGLPYNRVEDIVSFNEAYDDALAYPGASVIEVCVAQDQASEQIARLAAWIKQS.

It belongs to the TPP enzyme family. MenD subfamily. Homodimer. It depends on Mg(2+) as a cofactor. Requires Mn(2+) as cofactor. Thiamine diphosphate serves as cofactor.

The enzyme catalyses isochorismate + 2-oxoglutarate + H(+) = 5-enolpyruvoyl-6-hydroxy-2-succinyl-cyclohex-3-ene-1-carboxylate + CO2. It participates in quinol/quinone metabolism; 1,4-dihydroxy-2-naphthoate biosynthesis; 1,4-dihydroxy-2-naphthoate from chorismate: step 2/7. Its pathway is quinol/quinone metabolism; menaquinone biosynthesis. In terms of biological role, catalyzes the thiamine diphosphate-dependent decarboxylation of 2-oxoglutarate and the subsequent addition of the resulting succinic semialdehyde-thiamine pyrophosphate anion to isochorismate to yield 2-succinyl-5-enolpyruvyl-6-hydroxy-3-cyclohexene-1-carboxylate (SEPHCHC). This chain is 2-succinyl-5-enolpyruvyl-6-hydroxy-3-cyclohexene-1-carboxylate synthase, found in Shewanella loihica (strain ATCC BAA-1088 / PV-4).